The following is a 124-amino-acid chain: Small ribosomal subunit protein uS13 (124 aa).

Residues 95-124 (GLPVRGQRTKTNARTRKGPKRTIAGKKKAR) are disordered.

It belongs to the universal ribosomal protein uS13 family. As to quaternary structure, part of the 30S ribosomal subunit. Forms a loose heterodimer with protein S19. Forms two bridges to the 50S subunit in the 70S ribosome.

Its function is as follows. Located at the top of the head of the 30S subunit, it contacts several helices of the 16S rRNA. In the 70S ribosome it contacts the 23S rRNA (bridge B1a) and protein L5 of the 50S subunit (bridge B1b), connecting the 2 subunits; these bridges are implicated in subunit movement. Contacts the tRNAs in the A and P-sites. The chain is Small ribosomal subunit protein uS13 from Mycobacterium avium (strain 104).